Reading from the N-terminus, the 300-residue chain is MSATAVTADGLEEIEVDVVAVWKEGYVYENRGDTSVEQKITMTKGMKNLNSETKTLTATHTVGRTLKVGDPFEIGSVEVSYSFSHQESQVSMTQTEVYSSQVIEHTVTIPPTSKFTRWKLNADVGGTDIEYMYLIDEVTPISVTQTIPQVIRSRAKILVGRQIHLGTTAVRIKHAERQEYMTVIERKKWPAATLGKSNLFKFVLFEDSSGTRIKTLNTMYPGYEWAYSSDQGGVYFDESSDNPKQRWALSKALPLRHGDVVTFMNKYFTNSGLCYDDGPATNVYCLDKREDKWILEVVNP.

The interval 12 to 35 (EEIEVDVVAVWKEGYVYENRGDTS) is N-terminal cap domain. The segment at 36–109 (VEQKITMTKG…SQVIEHTVTI (74 aa)) is beta-hairpin domain. Residues 110-158 (PPTSKFTRWKLNADVGGTDIEYMYLIDEVTPISVTQTIPQVIRSRAKIL) are N-terminal cap domain. The interval 159-299 (VGRQIHLGTT…EDKWILEVVN (141 aa)) is C-terminal receptor-binding domain. An N-(acyl)-sphingosylphosphocholine-binding residues include K187, S229, Y235, and Y284. An intrachain disulfide couples C274 to C285.

Belongs to the lysenin family. In terms of assembly, binds to sphingomyelin as a monomer by using its C-terminal domain. Forms a nonamer when sphingomyelin/LRP-3 ratio is lower than ca 500. Oligomerization, but not binding, is influenced by the fluidity of sphingomyelin. In terms of tissue distribution, expressed by coelomocytes.

It is found in the secreted. The protein localises to the target cell membrane. In terms of biological role, pore-forming toxin that specifically binds sphingomyelin in the plasma membrane of various cells. Has antibacterial and hemolytic activity. In Eisenia fetida (Red wiggler worm), this protein is Lysenin-related protein 3.